The primary structure comprises 815 residues: Ent-sandaracopimara-8(14),15-diene synthase, chloroplastic (815 aa).

The N-terminal 38 residues, 1–38, are a transit peptide targeting the chloroplast; it reads MLPSSICSMGQIPRTSPHYYGMLPKQMSKGHPPMVTRA. The Mg(2+) site is built by Asp550, Asp554, Asn696, Thr700, and Glu704. A DDXXD motif motif is present at residues 550–554; the sequence is DDFFD.

Belongs to the terpene synthase family. The cofactor is Mg(2+).

The protein localises to the plastid. It is found in the chloroplast. The catalysed reaction is ent-copalyl diphosphate = ent-sandaracopimara-8(14),15-diene + diphosphate. It catalyses the reaction 9alpha-copalyl diphosphate = (12E)-9alpha-labda-8(17),12,14-triene + diphosphate. In terms of biological role, involved in the biosynthesis of oryzalexin A-F phytoalexins. Catalyzes the conversion of ent-copalyl diphosphate to the phytoalexin precursor ent-sandaracopimaradiene. This chain is Ent-sandaracopimara-8(14),15-diene synthase, chloroplastic, found in Oryza sativa subsp. japonica (Rice).